The chain runs to 314 residues: Leucine-rich repeat-containing protein 59 (314 aa).

Residues 1–247 lie on the Cytoplasmic side of the membrane; the sequence is MNKGKIENIK…VPKAKRSICS (247 aa). LRR repeat units follow at residues 14-35, 38-60, 61-82, 84-106, and 107-126; these read DGNE…ELAA, KATF…CSLT, HLIK…IGQL, NLQH…SQLK, and SLKW…AKAA. A coiled-coil region spans residues 146-216; the sequence is MKVLQEEAEK…AVAAQEQQKK (71 aa). 2 disordered regions span residues 165-197 and 212-237; these read REQE…KERK and EQQK…APES. Residues 215–225 are compositionally biased toward basic residues; sequence KKKKEEKKKKA. Residues 248 to 268 form a helical membrane-spanning segment; the sequence is LFFSLLLKLVLLLVIGVSSVV. The Lumenal portion of the chain corresponds to 269-314; the sequence is AVCQLTELRKEAFCIPLNVHFEETVRWAQGLDVVQQVIQKMSDLRT.

In terms of assembly, interacts with SGO1.

It is found in the microsome membrane. The protein resides in the endoplasmic reticulum membrane. Its subcellular location is the nucleus envelope. In terms of biological role, required for nuclear import of FGF1. The chain is Leucine-rich repeat-containing protein 59 (lrrc59) from Danio rerio (Zebrafish).